Here is a 971-residue protein sequence, read N- to C-terminus: uncharacterized protein (971 aa).

The N-terminal stretch at 1-24 is a signal peptide; the sequence is MQSNLLKVLGVLAIVATLVCFIFA. Residues 127-146 form a disordered region; it reads RTRPGKSNLDDSNQMIPIPR. Transmembrane regions (helical) follow at residues 611–631, 721–741, 753–773, 795–815, 832–852, and 865–885; these read IKAILILYVMTYGAMFLLGFA, LGLSGIIYFIITFIAVCIVII, AFMATCILIGIAPLFISFLLF, VVMMAGIIVLTQLFTIYLDFV, FIGTILPIALLNVPIFCINWF, and GVNMQNIVALVIIAYGMYGYV. Basic residues predominate over residues 933 to 944; sequence TSRAKSRLKQRN. The tract at residues 933 to 971 is disordered; sequence TSRAKSRLKQRNRTLEHAEQNSKKYMKKIGENTNEGTLK. The span at 945-954 shows a compositional bias: basic and acidic residues; that stretch reads RTLEHAEQNS.

It belongs to the TrbL/VirB6 family.

Its subcellular location is the cell membrane. This is an uncharacterized protein from Rickettsia typhi (strain ATCC VR-144 / Wilmington).